A 295-amino-acid polypeptide reads, in one-letter code: Xyloglucan endotransglucosylase protein 2 (295 aa).

The first 23 residues, 1–23 (MAMGTHFGGLWLALLCMVSATMG), serve as a signal peptide directing secretion. Residues 24–222 (AVPRKPVDVP…WSKAPFVASY (199 aa)) enclose the GH16 domain. Glu-108 serves as the catalytic Nucleophile. Glu-112 (proton donor) is an active-site residue. Glu-112 is a xyloglucan binding site. N-linked (GlcNAc...) asparagine glycosylation is present at Asn-116. Xyloglucan contacts are provided by residues 125 to 127 (QTN), 135 to 137 (DRE), 201 to 202 (DW), and Gly-206. 2 disulfides stabilise this stretch: Cys-230/Cys-239 and Cys-276/Cys-289. A xyloglucan-binding site is contributed by Arg-281.

The protein belongs to the glycosyl hydrolase 16 family. XTH group 1 subfamily. Contains at least one intrachain disulfide bond essential for its enzymatic activity. As to expression, expressed in fruit pulp.

Its subcellular location is the secreted. It localises to the cell wall. The protein resides in the extracellular space. The protein localises to the apoplast. It catalyses the reaction breaks a beta-(1-&gt;4) bond in the backbone of a xyloglucan and transfers the xyloglucanyl segment on to O-4 of the non-reducing terminal glucose residue of an acceptor, which can be a xyloglucan or an oligosaccharide of xyloglucan.. Its function is as follows. Catalyzes xyloglucan endotransglycosylation (XET). Cleaves and religates xyloglucan polymers. Does not catalyze xyloglucan endohydrolysis (XEH). Probably involved in cell wall restructuring during fruit ripening and postharvest fruit softening. The chain is Xyloglucan endotransglucosylase protein 2 from Diospyros kaki (Kaki persimmon).